The sequence spans 590 residues: Aspartate--tRNA(Asp/Asn) ligase (590 aa).

Glutamate 175 provides a ligand contact to L-aspartate. Residues 199–202 are aspartate; it reads QQYK. Residues arginine 221 and histidine 450 each contribute to the L-aspartate site. Residue 221 to 223 participates in ATP binding; it reads RDE. Glutamate 484 is an ATP binding site. L-aspartate is bound at residue arginine 491. An ATP-binding site is contributed by 536–539; it reads GVDR.

It belongs to the class-II aminoacyl-tRNA synthetase family. Type 1 subfamily. As to quaternary structure, homodimer.

The protein localises to the cytoplasm. The enzyme catalyses tRNA(Asx) + L-aspartate + ATP = L-aspartyl-tRNA(Asx) + AMP + diphosphate. In terms of biological role, aspartyl-tRNA synthetase with relaxed tRNA specificity since it is able to aspartylate not only its cognate tRNA(Asp) but also tRNA(Asn). Reaction proceeds in two steps: L-aspartate is first activated by ATP to form Asp-AMP and then transferred to the acceptor end of tRNA(Asp/Asn). In Rhodopseudomonas palustris (strain BisB5), this protein is Aspartate--tRNA(Asp/Asn) ligase.